Here is a 375-residue protein sequence, read N- to C-terminus: MKIVVDENMPYAEALFGRLGEVVAVRGRPLPAAALVGADALMVRSVTTVNQALLAGQRVRFVGTATAGTDHVDTAWLAQAGIGFSAAPGCNAIAVVEYVFSALMLLAERDGFALRDKTVGIVGVGNVGSRLQRRLTALGIRTLLCDPPRADRGDDEQFHSLADLQREADIITFHTPLNKSGPYRTLHLADADFLRGLPPGRILINAGRGAVVDNAALLQALEAGQDLRVVLDVWEPEPMLSLPLLARVDIATPHIAGYSLEGKARGTTQVFEAFSTFLGQPQSVVLPSLLPPPPVASVRIHGHPDQAMLKRLMHLVYDVRRDDVPLRRVAAQEGEFDRLRKHYPARREWSSLQVLCDDCTSASLLTALGFDARVA.

2 residues coordinate substrate: S45 and T66. Positions 146 and 175 each coordinate NAD(+). The active site involves R208. D232 contacts NAD(+). Residue E237 is part of the active site. H254 functions as the Proton donor in the catalytic mechanism. G257 is a binding site for NAD(+). Y258 contributes to the substrate binding site.

The protein belongs to the D-isomer specific 2-hydroxyacid dehydrogenase family. PdxB subfamily. Homodimer.

Its subcellular location is the cytoplasm. The catalysed reaction is 4-phospho-D-erythronate + NAD(+) = (R)-3-hydroxy-2-oxo-4-phosphooxybutanoate + NADH + H(+). It functions in the pathway cofactor biosynthesis; pyridoxine 5'-phosphate biosynthesis; pyridoxine 5'-phosphate from D-erythrose 4-phosphate: step 2/5. Its function is as follows. Catalyzes the oxidation of erythronate-4-phosphate to 3-hydroxy-2-oxo-4-phosphonooxybutanoate. The sequence is that of Erythronate-4-phosphate dehydrogenase from Edwardsiella ictaluri (strain 93-146).